A 509-amino-acid chain; its full sequence is AAA ATPase forming ring-shaped complexes (509 aa).

The stretch at 11 to 50 (AHLQRTISNLSARNAKLAELLKASRDKLSILQDQLEDLAA) forms a coiled coil. 236–241 (GCGKTL) serves as a coordination point for ATP.

Belongs to the AAA ATPase family. Homohexamer. Assembles into a hexameric ring structure.

The polypeptide is AAA ATPase forming ring-shaped complexes (Corynebacterium diphtheriae (strain ATCC 700971 / NCTC 13129 / Biotype gravis)).